A 1233-amino-acid chain; its full sequence is DNA-directed RNA polymerase subunit beta' (1233 aa).

Zn(2+) contacts are provided by Cys61, Cys63, Cys76, and Cys79. Residues Asp455, Asp457, and Asp459 each contribute to the Mg(2+) site. The Zn(2+) site is built by Cys824, Cys898, Cys905, and Cys908. A compositionally biased stretch (basic and acidic residues) spans 1211 to 1220 (ELQKAFDKEP). Residues 1211–1233 (ELQKAFDKEPASSTGNKASNSAK) are disordered. Residues 1221 to 1233 (ASSTGNKASNSAK) show a composition bias toward polar residues.

It belongs to the RNA polymerase beta' chain family. In terms of assembly, the RNAP catalytic core consists of 2 alpha, 1 beta, 1 beta' and 1 omega subunit. When a sigma factor is associated with the core the holoenzyme is formed, which can initiate transcription. Mg(2+) is required as a cofactor. It depends on Zn(2+) as a cofactor.

It catalyses the reaction RNA(n) + a ribonucleoside 5'-triphosphate = RNA(n+1) + diphosphate. DNA-dependent RNA polymerase catalyzes the transcription of DNA into RNA using the four ribonucleoside triphosphates as substrates. The polypeptide is DNA-directed RNA polymerase subunit beta' (Oenococcus oeni (strain ATCC BAA-331 / PSU-1)).